A 330-amino-acid chain; its full sequence is tRNA U34 carboxymethyltransferase (330 aa).

Carboxy-S-adenosyl-L-methionine-binding positions include Lys91, Trp105, Lys110, Gly130, 152 to 154 (DPS), 181 to 182 (IE), Met196, Tyr200, and Arg315.

It belongs to the class I-like SAM-binding methyltransferase superfamily. CmoB family. Homotetramer.

It catalyses the reaction carboxy-S-adenosyl-L-methionine + 5-hydroxyuridine(34) in tRNA = 5-carboxymethoxyuridine(34) in tRNA + S-adenosyl-L-homocysteine + H(+). In terms of biological role, catalyzes carboxymethyl transfer from carboxy-S-adenosyl-L-methionine (Cx-SAM) to 5-hydroxyuridine (ho5U) to form 5-carboxymethoxyuridine (cmo5U) at position 34 in tRNAs. This is tRNA U34 carboxymethyltransferase from Shewanella pealeana (strain ATCC 700345 / ANG-SQ1).